The following is a 214-amino-acid chain: Thymidylate kinase (214 aa).

13–20 provides a ligand contact to ATP; that stretch reads GPDACGKS.

It belongs to the thymidylate kinase family.

The catalysed reaction is dTMP + ATP = dTDP + ADP. Phosphorylation of dTMP to form dTDP in both de novo and salvage pathways of dTTP synthesis. This chain is Thymidylate kinase, found in Malacoplasma penetrans (strain HF-2) (Mycoplasma penetrans).